A 172-amino-acid polypeptide reads, in one-letter code: 3-hydroxydecanoyl-[acyl-carrier-protein] dehydratase (172 aa).

His-71 is an active-site residue.

This sequence belongs to the thioester dehydratase family. FabA subfamily. Homodimer.

It localises to the cytoplasm. The catalysed reaction is a (3R)-hydroxyacyl-[ACP] = a (2E)-enoyl-[ACP] + H2O. It catalyses the reaction (3R)-hydroxydecanoyl-[ACP] = (2E)-decenoyl-[ACP] + H2O. It carries out the reaction (2E)-decenoyl-[ACP] = (3Z)-decenoyl-[ACP]. Its pathway is lipid metabolism; fatty acid biosynthesis. Functionally, necessary for the introduction of cis unsaturation into fatty acids. Catalyzes the dehydration of (3R)-3-hydroxydecanoyl-ACP to E-(2)-decenoyl-ACP and then its isomerization to Z-(3)-decenoyl-ACP. Can catalyze the dehydratase reaction for beta-hydroxyacyl-ACPs with saturated chain lengths up to 16:0, being most active on intermediate chain length. The chain is 3-hydroxydecanoyl-[acyl-carrier-protein] dehydratase from Vibrio cholerae serotype O1 (strain ATCC 39541 / Classical Ogawa 395 / O395).